A 56-amino-acid chain; its full sequence is MAYVINEACISCGACEPECPVNAISSGDDRYVIDADTCIDCGACAGVCPVDAPVQA.

4Fe-4S ferredoxin-type domains are found at residues 1–28 (MAYVINEACISCGACEPECPVNAISSGD) and 29–56 (DRYVIDADTCIDCGACAGVCPVDAPVQA). Residues Cys9, Cys12, Cys15, Cys19, Cys38, Cys41, Cys44, and Cys48 each coordinate [4Fe-4S] cluster.

Requires [4Fe-4S] cluster as cofactor.

Its function is as follows. Ferredoxins are iron-sulfur proteins that transfer electrons in a wide variety of metabolic reactions. The polypeptide is 4Fe-4S ferredoxin FdxA (Gottschalkia acidurici (strain ATCC 7906 / DSM 604 / BCRC 14475 / CIP 104303 / KCTC 5404 / NCIMB 10678 / 9a) (Clostridium acidurici)).